A 102-amino-acid chain; its full sequence is ATP-dependent Clp protease adapter protein ClpS (102 aa).

The protein belongs to the ClpS family. In terms of assembly, binds to the N-terminal domain of the chaperone ClpA.

Functionally, involved in the modulation of the specificity of the ClpAP-mediated ATP-dependent protein degradation. The sequence is that of ATP-dependent Clp protease adapter protein ClpS from Shewanella halifaxensis (strain HAW-EB4).